The sequence spans 386 residues: Cytochrome b (386 aa).

A run of 4 helical transmembrane segments spans residues 32–52, 76–98, 113–133, and 179–199; these read FGSLLALCLGIQIVTGVTLAM, WMIRYLHANTASFFFLFVYLHIG, PWSIGVIILILMMATAFLGYV, and FFSLHYLLPFILAALAVMHLL. Residues His82 and His96 each coordinate heme b. Residues His183 and His197 each contribute to the heme b site. His202 is an a ubiquinone binding site. 4 helical membrane passes run 225 to 245, 289 to 309, 321 to 341, and 348 to 368; these read YTFKDLVTIFLFFLVLALFLF, LGGVIAMFGSLLILLAMPLLD, LMKFFFWLLVVDFLILLWCGS, and FITLGQFATTFYFSWFLIIVP.

Belongs to the cytochrome b family. As to quaternary structure, fungal cytochrome b-c1 complex contains 10 subunits; 3 respiratory subunits, 2 core proteins and 5 low-molecular weight proteins. Cytochrome b-c1 complex is a homodimer. Heme b is required as a cofactor.

Its subcellular location is the mitochondrion inner membrane. In terms of biological role, component of the ubiquinol-cytochrome c reductase complex (complex III or cytochrome b-c1 complex) that is part of the mitochondrial respiratory chain. The b-c1 complex mediates electron transfer from ubiquinol to cytochrome c. Contributes to the generation of a proton gradient across the mitochondrial membrane that is then used for ATP synthesis. This Rhizopus oryzae (Mucormycosis agent) protein is Cytochrome b (cob).